The primary structure comprises 931 residues: Myelin regulatory factor homolog 1 (931 aa).

The Cytoplasmic portion of the chain corresponds to 1–658; sequence MSSSDLLKGE…SCGSRLSQGT (658 aa). Residues 29 to 143 are disordered; it reads TDEDDGSMVS…QQHQQTRGGN (115 aa). A compositionally biased stretch (polar residues) spans 37–52; it reads VSPTSSADSMHQNLGV. Over residues 53–68 the composition is skewed to low complexity; that stretch reads QQQQQQMLQAQQRQNQ. Residues 117-126 are compositionally biased toward polar residues; that stretch reads DNGNQTMNNI. A compositionally biased stretch (low complexity) spans 127 to 138; that stretch reads QSQQLSQQQHQQ. Residues 169-436 constitute a DNA-binding region (NDT80); sequence GTAAVNQPTN…TNPGSFEPQD (268 aa). Residues 483–582 enclose the Peptidase S74 domain; it reads SDIRLKEAIT…RMTGDLDSKI (100 aa). A helical membrane pass occupies residues 659–679; that stretch reads VVTLVSIMAACLLAMSALYVL. The Lumenal segment spans residues 680–931; the sequence is DWHNRNYGYH…FYRMCTLSSS (252 aa). 2 N-linked (GlcNAc...) asparagine glycosylation sites follow: Asn797 and Asn912.

The protein belongs to the MRF family. As to quaternary structure, homotrimer. Interacts with myrf-2. Interacts (via C-terminus) with pan-1 (via LRR regions); the interaction promotes the role of myrf-1 in the synaptic remodeling of DD GABAergic motor neurons at the cell membrane. Myelin regulatory factor: Follows autocatalytic cleavage via the peptidase S74 domain. Autoprocessing is apparently constitutive and is essential for transcriptional activity. In terms of tissue distribution, widely expressed in many tissues, including neuronal, muscle and epidermal stem cells. In neurons, expressed in dorsal D (DD) GABAergic motor neurons.

The protein localises to the endoplasmic reticulum membrane. The protein resides in the nucleus. Its subcellular location is the apical cell membrane. It is found in the cytoplasm. Constitutes a precursor of the transcription factor. Mediates the autocatalytic cleavage that releases the Myelin regulatory factor homolog 1, N-terminal component that specifically activates transcription of genes involved in synaptic rewiring during nervous system maturation. Functionally, membrane-bound part that has no transcription factor activity and remains attached to the endoplasmic reticulum membrane following cleavage. In terms of biological role, transcription factor that specifically activates expression of genes involved in synaptic rewiring during nervous system maturation. Specifically required for dorsal D (DD) GABAergic motor neurons synaptic rewiring. Acts in complex with myrf-2 paralog. This Caenorhabditis elegans protein is Myelin regulatory factor homolog 1.